Consider the following 626-residue polypeptide: Hormonally up-regulated neu tumor-associated kinase homolog B (626 aa).

Residues 1 to 2 and Lys17 contribute to the ATP site; that span reads KV. Residues 1–246 enclose the Protein kinase domain; sequence KVREGLHVGT…IQQALANRWL (246 aa). Asp112 functions as the Proton acceptor in the catalytic mechanism. Residues 336–357 are compositionally biased toward basic and acidic residues; sequence KYKMNKNSYEERRSKDLEKRGE. 3 disordered regions span residues 336–407, 477–574, and 590–615; these read KYKM…ESFG, VNRE…RSRG, and QVVSPKGEKPLETRMPPLHQMSPGYA. The segment covering 374-390 has biased composition (polar residues); it reads SHRQSTCLTPQGHSSSK. Residues 392-405 are compositionally biased toward basic and acidic residues; that stretch reads PIKERRSSKSERES. The segment covering 518–532 has biased composition (polar residues); sequence DNTSPLKGHSNQASF. Low complexity predominate over residues 539–555; that stretch reads SPSSPESMSPTSPHSPS. Polar residues predominate over residues 556-566; the sequence is CNNNISGNLGS.

Belongs to the protein kinase superfamily. CAMK Ser/Thr protein kinase family. SNF1 subfamily. As to expression, in the egg, expressed predominantly in the animal hemisphere. This pattern of expression persists throughout the cleavage and blastula stages. At the gastrula stage, expression is restricted to the ectoderm. In later-stage embryos, expressed over the entire embryonic surface including the open neural plate at stage 15 and the neural tube at stage 22. In tadpoles, strongly expressed in the neural tube, motor neurons, brain regions and sensory organs (otic vesicle and eye). Also expressed in the perisomitic mesoderm, brachial arches and embryonic epidermis of tadpoles.

It catalyses the reaction L-seryl-[protein] + ATP = O-phospho-L-seryl-[protein] + ADP + H(+). It carries out the reaction L-threonyl-[protein] + ATP = O-phospho-L-threonyl-[protein] + ADP + H(+). The sequence is that of Hormonally up-regulated neu tumor-associated kinase homolog B (hunk-b) from Xenopus laevis (African clawed frog).